A 307-amino-acid polypeptide reads, in one-letter code: D-alanine--D-alanine ligase (307 aa).

The ATP-grasp domain occupies 108 to 301; it reads KEVFAAAGLP…FPEFCAWLVE (194 aa). Residue 135 to 185 coordinates ATP; that stretch reads LPPPYVVKPNAEGSSVGVYIVHEDANGPPQLAADMPQDLMVETYVPGRELT. The Mg(2+) site is built by Asp252, Glu268, and Asn270.

This sequence belongs to the D-alanine--D-alanine ligase family. The cofactor is Mg(2+). It depends on Mn(2+) as a cofactor.

Its subcellular location is the cytoplasm. The enzyme catalyses 2 D-alanine + ATP = D-alanyl-D-alanine + ADP + phosphate + H(+). It functions in the pathway cell wall biogenesis; peptidoglycan biosynthesis. In terms of biological role, cell wall formation. The sequence is that of D-alanine--D-alanine ligase from Cereibacter sphaeroides (strain ATCC 17029 / ATH 2.4.9) (Rhodobacter sphaeroides).